Here is a 128-residue protein sequence, read N- to C-terminus: Ribonuclease P protein component (128 aa).

Belongs to the RnpA family. As to quaternary structure, consists of a catalytic RNA component (M1 or rnpB) and a protein subunit.

The catalysed reaction is Endonucleolytic cleavage of RNA, removing 5'-extranucleotides from tRNA precursor.. Its function is as follows. RNaseP catalyzes the removal of the 5'-leader sequence from pre-tRNA to produce the mature 5'-terminus. It can also cleave other RNA substrates such as 4.5S RNA. The protein component plays an auxiliary but essential role in vivo by binding to the 5'-leader sequence and broadening the substrate specificity of the ribozyme. The polypeptide is Ribonuclease P protein component (Methylococcus capsulatus (strain ATCC 33009 / NCIMB 11132 / Bath)).